Here is a 90-residue protein sequence, read N- to C-terminus: Small ribosomal subunit protein bS20 (90 aa).

The protein belongs to the bacterial ribosomal protein bS20 family.

In terms of biological role, binds directly to 16S ribosomal RNA. This is Small ribosomal subunit protein bS20 from Francisella tularensis subsp. holarctica (strain FTNF002-00 / FTA).